The following is a 471-amino-acid chain: ATP synthase subunit beta (471 aa).

152–159 contributes to the ATP binding site; it reads GGAGVGKT.

It belongs to the ATPase alpha/beta chains family. F-type ATPases have 2 components, CF(1) - the catalytic core - and CF(0) - the membrane proton channel. CF(1) has five subunits: alpha(3), beta(3), gamma(1), delta(1), epsilon(1). CF(0) has three main subunits: a(1), b(2) and c(9-12). The alpha and beta chains form an alternating ring which encloses part of the gamma chain. CF(1) is attached to CF(0) by a central stalk formed by the gamma and epsilon chains, while a peripheral stalk is formed by the delta and b chains.

The protein localises to the cell membrane. The enzyme catalyses ATP + H2O + 4 H(+)(in) = ADP + phosphate + 5 H(+)(out). Produces ATP from ADP in the presence of a proton gradient across the membrane. The catalytic sites are hosted primarily by the beta subunits. This is ATP synthase subunit beta from Herpetosiphon aurantiacus (Herpetosiphon giganteus).